Reading from the N-terminus, the 464-residue chain is V-type ATP synthase beta chain (464 aa).

It belongs to the ATPase alpha/beta chains family.

Functionally, produces ATP from ADP in the presence of a proton gradient across the membrane. The V-type beta chain is a regulatory subunit. This Streptococcus sanguinis (strain SK36) protein is V-type ATP synthase beta chain.